Reading from the N-terminus, the 229-residue chain is ATP-dependent Clp protease proteolytic subunit (229 aa).

S101 functions as the Nucleophile in the catalytic mechanism. The active site involves H126.

This sequence belongs to the peptidase S14 family. Component of the chloroplastic Clp protease core complex.

The protein resides in the plastid. Its subcellular location is the chloroplast stroma. The enzyme catalyses Hydrolysis of proteins to small peptides in the presence of ATP and magnesium. alpha-casein is the usual test substrate. In the absence of ATP, only oligopeptides shorter than five residues are hydrolyzed (such as succinyl-Leu-Tyr-|-NHMec, and Leu-Tyr-Leu-|-Tyr-Trp, in which cleavage of the -Tyr-|-Leu- and -Tyr-|-Trp bonds also occurs).. Its function is as follows. Cleaves peptides in various proteins in a process that requires ATP hydrolysis. Has a chymotrypsin-like activity. Plays a major role in the degradation of misfolded proteins. The protein is ATP-dependent Clp protease proteolytic subunit of Mesostigma viride (Green alga).